The primary structure comprises 406 residues: Tryptophan synthase beta chain (406 aa).

K99 carries the N6-(pyridoxal phosphate)lysine modification.

This sequence belongs to the TrpB family. As to quaternary structure, tetramer of two alpha and two beta chains. Pyridoxal 5'-phosphate serves as cofactor.

The enzyme catalyses (1S,2R)-1-C-(indol-3-yl)glycerol 3-phosphate + L-serine = D-glyceraldehyde 3-phosphate + L-tryptophan + H2O. It participates in amino-acid biosynthesis; L-tryptophan biosynthesis; L-tryptophan from chorismate: step 5/5. Its function is as follows. The beta subunit is responsible for the synthesis of L-tryptophan from indole and L-serine. This is Tryptophan synthase beta chain from Methylobacterium nodulans (strain LMG 21967 / CNCM I-2342 / ORS 2060).